The sequence spans 254 residues: Uracil-DNA glycosylase (254 aa).

The Proton acceptor role is filled by D78.

This sequence belongs to the uracil-DNA glycosylase (UDG) superfamily. UNG family.

The protein localises to the cytoplasm. It carries out the reaction Hydrolyzes single-stranded DNA or mismatched double-stranded DNA and polynucleotides, releasing free uracil.. In terms of biological role, excises uracil residues from the DNA which can arise as a result of misincorporation of dUMP residues by DNA polymerase or due to deamination of cytosine. The polypeptide is Uracil-DNA glycosylase (Bordetella petrii (strain ATCC BAA-461 / DSM 12804 / CCUG 43448)).